We begin with the raw amino-acid sequence, 257 residues long: Aspartate/glutamate leucyltransferase (257 aa).

Belongs to the R-transferase family. Bpt subfamily.

Its subcellular location is the cytoplasm. The catalysed reaction is N-terminal L-glutamyl-[protein] + L-leucyl-tRNA(Leu) = N-terminal L-leucyl-L-glutamyl-[protein] + tRNA(Leu) + H(+). It catalyses the reaction N-terminal L-aspartyl-[protein] + L-leucyl-tRNA(Leu) = N-terminal L-leucyl-L-aspartyl-[protein] + tRNA(Leu) + H(+). Its function is as follows. Functions in the N-end rule pathway of protein degradation where it conjugates Leu from its aminoacyl-tRNA to the N-termini of proteins containing an N-terminal aspartate or glutamate. The sequence is that of Aspartate/glutamate leucyltransferase from Sphingopyxis alaskensis (strain DSM 13593 / LMG 18877 / RB2256) (Sphingomonas alaskensis).